Consider the following 1296-residue polypeptide: DNA-directed RNA polymerase subunit beta' (1296 aa).

Positions 60, 62, 75, and 78 each coordinate Zn(2+). Residues Asp535, Asp537, and Asp539 each contribute to the Mg(2+) site. 4 residues coordinate Zn(2+): Cys877, Cys954, Cys961, and Cys964.

This sequence belongs to the RNA polymerase beta' chain family. In terms of assembly, the RNAP catalytic core consists of 2 alpha, 1 beta, 1 beta' and 1 omega subunit. When a sigma factor is associated with the core the holoenzyme is formed, which can initiate transcription. Requires Mg(2+) as cofactor. The cofactor is Zn(2+).

The enzyme catalyses RNA(n) + a ribonucleoside 5'-triphosphate = RNA(n+1) + diphosphate. Its function is as follows. DNA-dependent RNA polymerase catalyzes the transcription of DNA into RNA using the four ribonucleoside triphosphates as substrates. In Beutenbergia cavernae (strain ATCC BAA-8 / DSM 12333 / CCUG 43141 / JCM 11478 / NBRC 16432 / NCIMB 13614 / HKI 0122), this protein is DNA-directed RNA polymerase subunit beta'.